The primary structure comprises 1049 residues: Protein argonaute 12 (1049 aa).

Gly residues predominate over residues Met1–Gly53. Disordered stretches follow at residues Met1–Val101 and Gly144–Thr192. Residues Ala54–Arg65 show a composition bias toward basic and acidic residues. Residues Gly66–Ala76 are compositionally biased toward gly residues. The span at Gly144–Gly160 shows a compositional bias: low complexity. In terms of domain architecture, PAZ spans Pro404–Glu515. One can recognise a Piwi domain in the interval Leu694–Glu1012.

This sequence belongs to the argonaute family. Ago subfamily.

Its function is as follows. Probably involved in the RNA silencing pathway. May bind to short RNAs such as microRNAs (miRNAs) or short interfering RNAs (siRNAs), and represses the translation of mRNAs which are complementary to them. The sequence is that of Protein argonaute 12 (AGO12) from Oryza sativa subsp. japonica (Rice).